The chain runs to 201 residues: 3-isopropylmalate dehydratase small subunit (201 aa).

It belongs to the LeuD family. LeuD type 1 subfamily. As to quaternary structure, heterodimer of LeuC and LeuD.

The enzyme catalyses (2R,3S)-3-isopropylmalate = (2S)-2-isopropylmalate. It functions in the pathway amino-acid biosynthesis; L-leucine biosynthesis; L-leucine from 3-methyl-2-oxobutanoate: step 2/4. In terms of biological role, catalyzes the isomerization between 2-isopropylmalate and 3-isopropylmalate, via the formation of 2-isopropylmaleate. The sequence is that of 3-isopropylmalate dehydratase small subunit from Rhizobium meliloti (strain 1021) (Ensifer meliloti).